A 215-amino-acid chain; its full sequence is Thiopurine S-methyltransferase (215 aa).

S-adenosyl-L-methionine is bound by residues Trp-10, Leu-45, Glu-66, and Arg-123.

It belongs to the class I-like SAM-binding methyltransferase superfamily. TPMT family.

It is found in the cytoplasm. It catalyses the reaction S-adenosyl-L-methionine + a thiopurine = S-adenosyl-L-homocysteine + a thiopurine S-methylether.. In Pseudomonas putida (strain W619), this protein is Thiopurine S-methyltransferase.